We begin with the raw amino-acid sequence, 95 residues long: Small ribosomal subunit protein uS19 (95 aa).

This sequence belongs to the universal ribosomal protein uS19 family.

Functionally, protein S19 forms a complex with S13 that binds strongly to the 16S ribosomal RNA. This is Small ribosomal subunit protein uS19 from Chloroflexus aggregans (strain MD-66 / DSM 9485).